Reading from the N-terminus, the 124-residue chain is Small ribosomal subunit protein uS12 (124 aa).

Residues 1–32 form a disordered region; sequence MPTIQQLVRKGRQDKVEKTKTPALKGSPQRRG. Over residues 11-20 the composition is skewed to basic and acidic residues; it reads GRQDKVEKTK. Asp89 bears the 3-methylthioaspartic acid mark.

This sequence belongs to the universal ribosomal protein uS12 family. As to quaternary structure, part of the 30S ribosomal subunit. Contacts proteins S8 and S17. May interact with IF1 in the 30S initiation complex.

With S4 and S5 plays an important role in translational accuracy. Its function is as follows. Interacts with and stabilizes bases of the 16S rRNA that are involved in tRNA selection in the A site and with the mRNA backbone. Located at the interface of the 30S and 50S subunits, it traverses the body of the 30S subunit contacting proteins on the other side and probably holding the rRNA structure together. The combined cluster of proteins S8, S12 and S17 appears to hold together the shoulder and platform of the 30S subunit. The polypeptide is Small ribosomal subunit protein uS12 (Frankia alni (strain DSM 45986 / CECT 9034 / ACN14a)).